Reading from the N-terminus, the 602-residue chain is Probable translation initiation factor IF-2 (602 aa).

Residues 10 to 227 (LRQPIVVVLG…LLAGLTQNYM (218 aa)) enclose the tr-type G domain. The tract at residues 19-26 (GHVDHGKT) is G1. 19-26 (GHVDHGKT) lines the GTP pocket. The tract at residues 44–48 (EMTQE) is G2. Residues 83–86 (DTPG) are G3. Residues 83-87 (DTPGH) and 137-140 (NKID) each bind GTP. The interval 137–140 (NKID) is G4. The G5 stretch occupies residues 205–207 (SAK).

Belongs to the TRAFAC class translation factor GTPase superfamily. Classic translation factor GTPase family. IF-2 subfamily.

In terms of biological role, function in general translation initiation by promoting the binding of the formylmethionine-tRNA to ribosomes. Seems to function along with eIF-2. This chain is Probable translation initiation factor IF-2, found in Sulfurisphaera tokodaii (strain DSM 16993 / JCM 10545 / NBRC 100140 / 7) (Sulfolobus tokodaii).